We begin with the raw amino-acid sequence, 189 residues long: Elongation factor P (189 aa).

This sequence belongs to the elongation factor P family.

Its subcellular location is the cytoplasm. The protein operates within protein biosynthesis; polypeptide chain elongation. Functionally, involved in peptide bond synthesis. Stimulates efficient translation and peptide-bond synthesis on native or reconstituted 70S ribosomes in vitro. Probably functions indirectly by altering the affinity of the ribosome for aminoacyl-tRNA, thus increasing their reactivity as acceptors for peptidyl transferase. The polypeptide is Elongation factor P (Ehrlichia ruminantium (strain Gardel)).